The primary structure comprises 322 residues: Structural glycoprotein p40 (322 aa).

N-linked (GlcNAc...) asparagine; by host glycosylation is found at asparagine 130, asparagine 283, and asparagine 290.

Belongs to the baculoviridae gp41 family.

Its subcellular location is the virion. This Heliothis zea nuclear polyhedrosis virus (HzSNPV) protein is Structural glycoprotein p40 (P40).